A 440-amino-acid chain; its full sequence is Protein scalloped (440 aa).

The tract at residues 32 to 65 (TEQQAVGPGTIPSPWTPVNAGPPGALGSADTNGS) is disordered. The segment at residues 86 to 162 (SADAEGVWSP…QVLARRKLRE (77 aa)) is a DNA-binding region (TEA).

As to quaternary structure, the C-terminus of sd interacts with the C-terminal serine-rich protein domain of vg, to form a complex which acts as a selector for wing development. Interacts (via C-terminus) with yki (via N-terminus) and this interaction enhances its transcriptional activity. As to expression, subset of neuroblasts in the central nervous system and in the peripheral sense organs of the embryo. Expressed in the developing wing primordia initially along the D/V wing boundary, and by the late third larval instar, maximal expression is seen in cells at the D/V wing disk boundary. Less expression in cells located farther from this boundary. Also expressed in wing progenitor cells.

Its subcellular location is the nucleus. Transcription factor which plays a key role in the Hippo/SWH (Sav/Wts/Hpo) signaling pathway, a signaling pathway that plays a pivotal role in organ size control and tumor suppression by restricting proliferation and promoting apoptosis. The core of this pathway is composed of a kinase cascade wherein Hippo (Hpo), in complex with its regulatory protein Salvador (Sav), phosphorylates and activates Warts (Wts) in complex with its regulatory protein Mats, which in turn phosphorylates and inactivates the Yorkie (Yki) oncoprotein. The Hippo/SWH signaling pathway inhibits the activity of the transcriptional complex formed by Scalloped (sd) and Yki and the target genes of this pathway include cyclin-E (cycE), diap1 and bantam. Sd promotes nuclear localization of Yki. Involved in the regulation of cell-specific gene expression during development, particularly in the differentiation of the nervous system. When in combination with vestigial (vg) it acts as a transcriptional activation complex that regulates gene expression in the wing. Binding to vg switches the DNA target selectivity of sd. Required autonomously for cell proliferation and viability within the wing blade. Required for proper sensory organ precursor (SOP) differentiation at the wing margin; required for correct expression of sens. The sequence is that of Protein scalloped (sd) from Drosophila melanogaster (Fruit fly).